Here is a 401-residue protein sequence, read N- to C-terminus: Phosphoglycerate kinase (401 aa).

Substrate contacts are provided by residues 20–22, R35, 58–61, R117, and R154; these read DFN and HLGR. ATP-binding positions include K204, G298, E329, and 358-361; that span reads GGDS.

This sequence belongs to the phosphoglycerate kinase family. Monomer.

It is found in the cytoplasm. The enzyme catalyses (2R)-3-phosphoglycerate + ATP = (2R)-3-phospho-glyceroyl phosphate + ADP. It functions in the pathway carbohydrate degradation; glycolysis; pyruvate from D-glyceraldehyde 3-phosphate: step 2/5. This Bifidobacterium adolescentis (strain ATCC 15703 / DSM 20083 / NCTC 11814 / E194a) protein is Phosphoglycerate kinase.